Reading from the N-terminus, the 276-residue chain is Glutamate racemase (276 aa).

Residues 10–11 (DS) and 42–43 (YG) contribute to the substrate site. Catalysis depends on Cys-74, which acts as the Proton donor/acceptor. A substrate-binding site is contributed by 75-76 (NT). The active-site Proton donor/acceptor is Cys-185. Residue 186-187 (TH) participates in substrate binding.

It belongs to the aspartate/glutamate racemases family.

It carries out the reaction L-glutamate = D-glutamate. It functions in the pathway cell wall biogenesis; peptidoglycan biosynthesis. Its function is as follows. Provides the (R)-glutamate required for cell wall biosynthesis. In Levilactobacillus brevis (strain ATCC 367 / BCRC 12310 / CIP 105137 / JCM 1170 / LMG 11437 / NCIMB 947 / NCTC 947) (Lactobacillus brevis), this protein is Glutamate racemase.